The following is a 73-amino-acid chain: MASNMEVFCEILIAILLPPLGVCLKRGCCTVEFLICLVLTILGYIPGIIYALYVIVFQNREGSTELGAPLNSA.

2 helical membrane passes run 4-24 (NMEV…GVCL) and 37-57 (LVLT…VIVF).

Belongs to the UPF0057 (PMP3) family.

It is found in the membrane. This chain is UPF0057 membrane protein At4g30650, found in Arabidopsis thaliana (Mouse-ear cress).